Here is a 160-residue protein sequence, read N- to C-terminus: uncharacterized protein (160 aa).

This is an uncharacterized protein from Magallana gigas (Pacific oyster).